The following is a 224-amino-acid chain: Cytidylate kinase (224 aa).

12 to 20 (GPAGAGKST) is a binding site for ATP.

Belongs to the cytidylate kinase family. Type 1 subfamily.

It localises to the cytoplasm. It carries out the reaction CMP + ATP = CDP + ADP. It catalyses the reaction dCMP + ATP = dCDP + ADP. The polypeptide is Cytidylate kinase (Caldanaerobacter subterraneus subsp. tengcongensis (strain DSM 15242 / JCM 11007 / NBRC 100824 / MB4) (Thermoanaerobacter tengcongensis)).